A 432-amino-acid polypeptide reads, in one-letter code: Nematocyst expressed protein 3-like (432 aa).

The signal sequence occupies residues 1–19; that stretch reads MRVVYLVLVVAVIIAITEA. Intrachain disulfides connect Cys-52–Cys-91, Cys-59–Cys-84, Cys-73–Cys-88, Cys-125–Cys-140, Cys-157–Cys-176, and Cys-166–Cys-180. 3 consecutive ShKT domains span residues 59–91, 107–143, and 149–183; these read CKAF…CKLC, VVRA…CMLC, and GPCD…CDVY. The segment covering 235–313 has biased composition (low complexity); it reads GAQYPAATAA…PEAAPSEPEA (79 aa). Residues 235–432 form a disordered region; it reads GAQYPAATAA…KSKSGHKRHH (198 aa). Residues 314-330 show a composition bias toward pro residues; it reads APAPAPEMAPAPAPEMA. Positions 331-408 are enriched in low complexity; that stretch reads PAPEAASAPA…AAPSEQPMPG (78 aa). Positions 409 to 432 are enriched in basic residues; that stretch reads KKSKSKPSKRKGVKKSKSGHKRHH.

It belongs to the NEP3 family. As to expression, nematocytes. In late planulae, transcripts are found throughout the ectoderm in nematocytes, with high concentration of expressing cells in the oral pole. In primary polyps, is expressed in nematocytes in the body wall and physa ectoderm and in the upper and lower pharynx.

The protein localises to the nematocyst. It is found in the secreted. Functionally, probable toxin. The chain is Nematocyst expressed protein 3-like from Nematostella vectensis (Starlet sea anemone).